The sequence spans 68 residues: DNA-directed RNA polymerase subunit omega (68 aa).

This sequence belongs to the RNA polymerase subunit omega family. The RNAP catalytic core consists of 2 alpha, 1 beta, 1 beta' and 1 omega subunit. When a sigma factor is associated with the core the holoenzyme is formed, which can initiate transcription.

It carries out the reaction RNA(n) + a ribonucleoside 5'-triphosphate = RNA(n+1) + diphosphate. Promotes RNA polymerase assembly. Latches the N- and C-terminal regions of the beta' subunit thereby facilitating its interaction with the beta and alpha subunits. The polypeptide is DNA-directed RNA polymerase subunit omega (Brevibacillus brevis (strain 47 / JCM 6285 / NBRC 100599)).